Here is a 515-residue protein sequence, read N- to C-terminus: Iroquois-class homeodomain protein IRX-4 (515 aa).

The segment at residues Gly144 to Asn205 is a DNA-binding region (homeobox; TALE-type). Disordered stretches follow at residues Asn205–Leu258, Thr278–Leu307, and Gly398–Asp425. The span at Lys214–Gly223 shows a compositional bias: basic and acidic residues. A compositionally biased stretch (acidic residues) spans Glu224–Arg236. A compositionally biased stretch (basic and acidic residues) spans Glu237–Glu257. Residues Pro399–Ala419 show a composition bias toward low complexity.

It belongs to the TALE/IRO homeobox family. In terms of assembly, interacts with the vitamin D receptor VDR but doesn't affect its transactivation activity. Expressed in the developing central nervous system, skin, and vibrissae, but predominantly expressed in the cardiac ventricles of the developing heart. Not expressed in the developing metanephric kidney or adult kidney.

The protein localises to the nucleus. Likely to be an important mediator of ventricular differentiation during cardiac development. This chain is Iroquois-class homeodomain protein IRX-4 (Irx4), found in Mus musculus (Mouse).